The primary structure comprises 581 residues: MVFSVAKKDTTPYEGQKPGTSGLRKKVTVFQQPHYLANFVQSTFNALPAEEVKGATIVVSGDGRYFSKDAVQIIAKMAAANGVRRVWVGQGSLLSTPAVSAIIRERIAADGSKATGGFILTASHNPGGPTEDFGIKYNMGNGGPAPESVTDKIFSNTKTISEYLIAEDLPDVDISVIGVTTFTGPEGPFDVDVFDSATEYVKLMKTIFDFESIKKLLASPKFSFCFDGMHGVAGAYAKRIFVDELGASESSLLNCVPKEDFGGGHPDPNLTYAKELVDRMGLGKTSNVEPPEFGAAADGDADRNMILGKRFFVTPSDSVAIIAANAVQSIPYFASGLKGVARSMPTSAALDVVAKNLNLKFFEVPTGWKFFGNLMDAGMCSVCGEESFGTGSDHIREKDGIWAVLAWLSILAYKNKDNLGGDKLVTVENIVLQHWGIYGRHYYTRYDYENVDAEAAKELMANLVKMQSSLSDVNKLIKEIQPNVADVVSADEFEYTDPVDGSVSKHQGIRYLFGDGSRLVFRLSGTGSVGATIRIYIEQYEKDSSKTGRESSDALSPLVDVALKLSKIQELTGRSAPTVIT.

Positions Met-1–Thr-11 are enriched in basic and acidic residues. Residues Met-1–Thr-20 form a disordered region. Arg-24 and Ser-123 together coordinate alpha-D-glucose 1,6-bisphosphate. The active-site Phosphoserine intermediate is Ser-123. Residues Ser-123, Asp-298, Asp-300, and Asp-302 each contribute to the Mg(2+) site. Ser-123 carries the phosphoserine modification. Alpha-D-glucose 1,6-bisphosphate-binding residues include Asp-302, Arg-303, Thr-366, Glu-385, Ser-387, and Lys-398.

This sequence belongs to the phosphohexose mutase family. In terms of assembly, monomer. Mg(2+) is required as a cofactor.

The protein resides in the cytoplasm. The catalysed reaction is alpha-D-glucose 1-phosphate = alpha-D-glucose 6-phosphate. The enzyme catalyses O-phospho-L-seryl-[protein] + alpha-D-glucose 1-phosphate = alpha-D-glucose 1,6-bisphosphate + L-seryl-[protein]. It catalyses the reaction alpha-D-glucose 1,6-bisphosphate + L-seryl-[protein] = O-phospho-L-seryl-[protein] + alpha-D-glucose 6-phosphate. Catalyzes the reversible isomerization of alpha-D-glucose 1-phosphate to alpha-D-glucose 6-phosphate. The mechanism proceeds via the intermediate compound alpha-D-glucose 1,6-bisphosphate. This enzyme participates in both the breakdown and synthesis of glucose. The chain is Phosphoglucomutase, cytoplasmic (PGM1) from Bromus inermis (Smooth brome grass).